The sequence spans 498 residues: Dynein regulatory complex subunit 2 (498 aa).

Coiled coils occupy residues 98 to 160, 250 to 311, and 417 to 441; these read VIKS…RKTI, KDEK…KAQR, and SLRH…QYLD.

This sequence belongs to the DRC2 family. Component of the nexin-dynein regulatory complex (N-DRC). Interacts with DRC1.

Its subcellular location is the cytoplasm. The protein localises to the cytoskeleton. It is found in the flagellum basal body. It localises to the cell projection. The protein resides in the cilium. Its subcellular location is the flagellum. The protein localises to the flagellum axoneme. Its function is as follows. Component of the nexin-dynein regulatory complex (N-DRC), a key regulator of ciliary/flagellar motility which maintains the alignment and integrity of the distal axoneme and regulates microtubule sliding in motile axonemes. Plays a critical role in the assembly of N-DRC and also stabilizes the assembly of multiple inner dynein arms and radial spokes. Coassembles with DRC1 to form a central scaffold needed for assembly of the N-DRC and its attachment to the outer doublet microtubules. The chain is Dynein regulatory complex subunit 2 (CCDC65) from Bos taurus (Bovine).